Reading from the N-terminus, the 200-residue chain is MSQSDQPDSSVTQAQAEEAVRTLLRWAGEDPAREGLLDTPRRVAEAYGDWFSGYREEPRAYLERTFEEVAGYDELIVLRDISYESHCEHHMAPIIGKVHVGYLPRGKVVGISKLARVVESYARRFQVQEKMTAQIAQCIQDVLQPRGVGVVVEGAHECMTTRGIHKRGVSMVTSKMLGSFREDARTRAEFLQFIEVGGKR.

Residues Cys87, His90, and Cys158 each coordinate Zn(2+).

It belongs to the GTP cyclohydrolase I family. Toroid-shaped homodecamer, composed of two pentamers of five dimers.

It catalyses the reaction GTP + H2O = 7,8-dihydroneopterin 3'-triphosphate + formate + H(+). It participates in cofactor biosynthesis; 7,8-dihydroneopterin triphosphate biosynthesis; 7,8-dihydroneopterin triphosphate from GTP: step 1/1. This chain is GTP cyclohydrolase 1, found in Xanthomonas campestris pv. campestris (strain ATCC 33913 / DSM 3586 / NCPPB 528 / LMG 568 / P 25).